Here is a 312-residue protein sequence, read N- to C-terminus: Acetylglutamate kinase (312 aa).

Residues 76–77 (GG), R98, and N199 each bind substrate.

It belongs to the acetylglutamate kinase family. ArgB subfamily.

The protein resides in the cytoplasm. It carries out the reaction N-acetyl-L-glutamate + ATP = N-acetyl-L-glutamyl 5-phosphate + ADP. It participates in amino-acid biosynthesis; L-arginine biosynthesis; N(2)-acetyl-L-ornithine from L-glutamate: step 2/4. In terms of biological role, catalyzes the ATP-dependent phosphorylation of N-acetyl-L-glutamate. This chain is Acetylglutamate kinase, found in Beutenbergia cavernae (strain ATCC BAA-8 / DSM 12333 / CCUG 43141 / JCM 11478 / NBRC 16432 / NCIMB 13614 / HKI 0122).